Reading from the N-terminus, the 72-residue chain is Translation initiation factor IF-1 (72 aa).

Positions 1 to 72 constitute an S1-like domain; that stretch reads MAKEDNIEMQ…SKGRIVFRSR (72 aa).

The protein belongs to the IF-1 family. As to quaternary structure, component of the 30S ribosomal translation pre-initiation complex which assembles on the 30S ribosome in the order IF-2 and IF-3, IF-1 and N-formylmethionyl-tRNA(fMet); mRNA recruitment can occur at any time during PIC assembly.

It localises to the cytoplasm. One of the essential components for the initiation of protein synthesis. Stabilizes the binding of IF-2 and IF-3 on the 30S subunit to which N-formylmethionyl-tRNA(fMet) subsequently binds. Helps modulate mRNA selection, yielding the 30S pre-initiation complex (PIC). Upon addition of the 50S ribosomal subunit IF-1, IF-2 and IF-3 are released leaving the mature 70S translation initiation complex. This chain is Translation initiation factor IF-1, found in Shewanella loihica (strain ATCC BAA-1088 / PV-4).